The sequence spans 557 residues: MRVLPAAMLVGAATAAVPPFQQVLGGNGAKHGADHAAEVPADHSADGFSKPLHAFQEELKSLSDEARKLWDEVASFFPESMDQNPLFSLPKKHNRRPDSHWDHIVRGSDVQSVWVTGENGEKEREVDGKLEAYDLRVKKTDPGSLGIDPGVKQYTGYLDDNENDKHLFYWFFESRNDPENDPVVLWLNGGPGCSSLTGLFMELGPSSINKKIQPVYNDYAWNSNASVIFLDQPVNVGYSYSNSAVSDTVAAGKDVYALLTLFFKQFPEYAKQDFHIAGESYAGHYIPVFASEILSHKKRNINLQSVLIGNGLTDGYTQYEYYRPMACGDGGYPAVLDESSCQSMDNALPRCQSMIESCYSSESAWVCVPASIYCNNALLAPYQRTGQNVYDVRGKCEDSSNLCYSAMGYVSDYLNKPEVIEAVGAEVNGYDSCNFDINRNFLFHGDWMKPYHRLVPGLLEQIPVLIYAGDADFICNWLGNKAWTEALEWPGQAEYASAELEDLVIVDNEHTGKKIGQVKSHGNFTFMRLYGGGHMVPMDQPESSLEFFNRWLGGEWF.

Positions 1–17 (MRVLPAAMLVGAATAAV) are cleaved as a signal peptide. Residues 18-138 (PPFQQVLGGN…KLEAYDLRVK (121 aa)) constitute a propeptide that is removed on maturation. Cystine bridges form between cysteine 193–cysteine 433, cysteine 327–cysteine 341, cysteine 351–cysteine 374, cysteine 358–cysteine 367, and cysteine 396–cysteine 403. Asparagine 224 carries an N-linked (GlcNAc...) asparagine glycan. Serine 280 is a catalytic residue. Aspartate 472 is a catalytic residue. Asparagine 523 carries N-linked (GlcNAc...) asparagine glycosylation. Histidine 534 is a catalytic residue.

Belongs to the peptidase S10 family.

The protein resides in the vacuole. The enzyme catalyses Release of a C-terminal amino acid with broad specificity.. Its function is as follows. Vacuolar carboxypeptidase involved in degradation of small peptides. Digests preferentially peptides containing an aliphatic or hydrophobic residue in P1' position, as well as methionine, leucine or phenylalanine in P1 position of ester substrate. This Aspergillus niger (strain ATCC MYA-4892 / CBS 513.88 / FGSC A1513) protein is Carboxypeptidase Y homolog A (cpyA).